The sequence spans 387 residues: 3-ketoacyl-CoA thiolase (387 aa).

C91 (acyl-thioester intermediate) is an active-site residue. Catalysis depends on proton acceptor residues H343 and C373.

Belongs to the thiolase-like superfamily. Thiolase family. As to quaternary structure, heterotetramer of two alpha chains (FadB) and two beta chains (FadA).

It is found in the cytoplasm. The catalysed reaction is an acyl-CoA + acetyl-CoA = a 3-oxoacyl-CoA + CoA. Its pathway is lipid metabolism; fatty acid beta-oxidation. Functionally, catalyzes the final step of fatty acid oxidation in which acetyl-CoA is released and the CoA ester of a fatty acid two carbons shorter is formed. In Vibrio cholerae serotype O1 (strain ATCC 39541 / Classical Ogawa 395 / O395), this protein is 3-ketoacyl-CoA thiolase.